The chain runs to 300 residues: MIKTSWEGNCFLNFFNNKVSLGNVDKTIFKSKSTSPYKLLKSTHDQEGRCILPVLHTAGGLVGGDLLVFEVNLEKNSKVLLTTSSAQKVYGSVGISKINPKGSFSKQKNLINILDNSHLEYLPQETIIFANGLYEQIFKVSISETSSFLFTDLIRLGRSSSGESIESGVFRSRLEIIRNNDLLDDWEYVDQIELSKASFVAKSGMDYMPVFGSLIWICEKDFSKSKINNLVRKIKKIFNKTNNNLSIGILENGISVRFLGSSSQDARKCFFRIWKQIRSVSGFCEPKYQGVWPLQDSMNY.

The protein belongs to the UreD family. In terms of assembly, ureD, UreF and UreG form a complex that acts as a GTP-hydrolysis-dependent molecular chaperone, activating the urease apoprotein by helping to assemble the nickel containing metallocenter of UreC. The UreE protein probably delivers the nickel.

It localises to the cytoplasm. Functionally, required for maturation of urease via the functional incorporation of the urease nickel metallocenter. The polypeptide is Urease accessory protein UreD (Prochlorococcus marinus (strain AS9601)).